The primary structure comprises 162 residues: Necrosis-inducing secreted protein 1 (162 aa).

A signal peptide spans 1-19 (MQFLTSLAAAASLVSLASA). 4 N-linked (GlcNAc...) asparagine glycosylation sites follow: Asn88, Asn126, Asn133, and Asn150. A BAK1/SERK3-binding region spans residues 103–132 (EYVIAASLFSLYGASSSPTVSNYNVTVNVG).

This sequence belongs to the NIS1 effector family. In terms of assembly, interacts with the host pattern recognition receptor (PRR)-associated kinases BAK1/SERK3, BKK1/SERK4 and BIK1.

Its subcellular location is the secreted. It localises to the host cytoplasm. Secreted effector that induces necrotic lesions in Nicotiana benthamiana. Interacts with the host receptor-like kinases (RLKs) BAK1/SERK3 and BKK1/SERK4, inhibits their kinase activity and suppresses INF1-induced pathogen-associated molecular pattern (PAMP)-triggered immunity (PTI) in N.benthamiana. Also interacts with the host receptor-like cytoplasmic kinase (RLCK) BIK1 and inhibits its kinase activity, thereby inhibiting PAMP-induced ROS generation. In PTI, phosphorylation relaying by RLKs and RLCKs is critical for the initiation of downstream signaling. The polypeptide is Necrosis-inducing secreted protein 1 (Colletotrichum orbiculare (strain 104-T / ATCC 96160 / CBS 514.97 / LARS 414 / MAFF 240422) (Cucumber anthracnose fungus)).